A 392-amino-acid chain; its full sequence is 8-amino-7-oxononanoate synthase (392 aa).

Position 19 (arginine 19) interacts with substrate. 106-107 (GY) serves as a coordination point for pyridoxal 5'-phosphate. Residue histidine 131 coordinates substrate. The pyridoxal 5'-phosphate site is built by serine 176, histidine 204, and threonine 233. An N6-(pyridoxal phosphate)lysine modification is found at lysine 236. Threonine 350 contacts substrate.

The protein belongs to the class-II pyridoxal-phosphate-dependent aminotransferase family. BioF subfamily. In terms of assembly, homodimer. It depends on pyridoxal 5'-phosphate as a cofactor.

The catalysed reaction is 6-carboxyhexanoyl-[ACP] + L-alanine + H(+) = (8S)-8-amino-7-oxononanoate + holo-[ACP] + CO2. It participates in cofactor biosynthesis; biotin biosynthesis. In terms of biological role, catalyzes the decarboxylative condensation of pimeloyl-[acyl-carrier protein] and L-alanine to produce 8-amino-7-oxononanoate (AON), [acyl-carrier protein], and carbon dioxide. The polypeptide is 8-amino-7-oxononanoate synthase (Pseudomonas fluorescens (strain ATCC BAA-477 / NRRL B-23932 / Pf-5)).